The sequence spans 520 residues: Probable glycine dehydrogenase (decarboxylating) subunit 2 (520 aa).

Residues 1–29 (MWRQSRWNEPLITEMSRRGRRGALPPRPD) are disordered. Lysine 279 is subject to N6-(pyridoxal phosphate)lysine.

This sequence belongs to the GcvP family. C-terminal subunit subfamily. The glycine cleavage system is composed of four proteins: P, T, L and H. In this organism, the P 'protein' is a heterodimer of two subunits. Pyridoxal 5'-phosphate is required as a cofactor.

It carries out the reaction N(6)-[(R)-lipoyl]-L-lysyl-[glycine-cleavage complex H protein] + glycine + H(+) = N(6)-[(R)-S(8)-aminomethyldihydrolipoyl]-L-lysyl-[glycine-cleavage complex H protein] + CO2. Its function is as follows. The glycine cleavage system catalyzes the degradation of glycine. The P protein binds the alpha-amino group of glycine through its pyridoxal phosphate cofactor; CO(2) is released and the remaining methylamine moiety is then transferred to the lipoamide cofactor of the H protein. The polypeptide is Probable glycine dehydrogenase (decarboxylating) subunit 2 (Aeropyrum pernix (strain ATCC 700893 / DSM 11879 / JCM 9820 / NBRC 100138 / K1)).